Here is a 377-residue protein sequence, read N- to C-terminus: MSPLRIGTRGSALATTQTSHVAEALTARSGLAHELVVIRTEGDVTTGSLASLGGTGVFASALRAAVLDGVVDAAVHSLKDLPAAQPETLEIAAVPARADLRDALCARDGLTLATLPEGARVGTGSPRRVAQLKALRPDLELVDIRGNVQTRLARVPGLEQHDDHAPAAVGSPRGDLDAVILACAGLDRLGLDHVITERIDPEVMVPAPGQGALAMEIRAEDESFLGRALLDPEAPVGRLHAALELVDDRDTHVAVTAERALLRRLEAGCAAPIGAVARVGDGEAGAPRIEMTAMVAALDGSRVLRRTSSVQLDPVPADVVGDPAAADEWLEDTLFVAAEALGVHVAEQFVAEGADLLPGTVRGVDRGDGAPRPDDPA.

Residue Cys-269 is modified to S-(dipyrrolylmethanemethyl)cysteine.

Belongs to the HMBS family. Monomer. The cofactor is dipyrromethane.

The catalysed reaction is 4 porphobilinogen + H2O = hydroxymethylbilane + 4 NH4(+). It functions in the pathway porphyrin-containing compound metabolism; protoporphyrin-IX biosynthesis; coproporphyrinogen-III from 5-aminolevulinate: step 2/4. Functionally, tetrapolymerization of the monopyrrole PBG into the hydroxymethylbilane pre-uroporphyrinogen in several discrete steps. This is Porphobilinogen deaminase from Micrococcus luteus (strain ATCC 4698 / DSM 20030 / JCM 1464 / CCM 169 / CCUG 5858 / IAM 1056 / NBRC 3333 / NCIMB 9278 / NCTC 2665 / VKM Ac-2230) (Micrococcus lysodeikticus).